The sequence spans 318 residues: 26 kDa endochitinase 1 (318 aa).

The N-terminal stretch at 1–19 is a signal peptide; sequence MRAFVLFAVVAMAATMAVA. The 40-residue stretch at 20 to 59 folds into the Chitin-binding type-1 domain; that stretch reads EQCGSQAGGATCPNCLCCSRFGWCGSTPYCGDGCQSQCSG. 7 cysteine pairs are disulfide-bonded: cysteine 22–cysteine 37, cysteine 31–cysteine 43, cysteine 36–cysteine 49, cysteine 53–cysteine 57, cysteine 98–cysteine 160, cysteine 172–cysteine 180, and cysteine 279–cysteine 311. Glutamate 142 serves as the catalytic Proton donor.

The protein belongs to the glycosyl hydrolase 19 family. Chitinase class I subfamily.

It carries out the reaction Random endo-hydrolysis of N-acetyl-beta-D-glucosaminide (1-&gt;4)-beta-linkages in chitin and chitodextrins.. Functionally, defense against chitin-containing fungal pathogens. This chain is 26 kDa endochitinase 1, found in Hordeum vulgare (Barley).